The sequence spans 212 residues: Imidazole glycerol phosphate synthase subunit HisH (212 aa).

One can recognise a Glutamine amidotransferase type-1 domain in the interval 1 to 211 (MIGVIDYGMG…KQFTQEQKVK (211 aa)). The active-site Nucleophile is Cys79. Catalysis depends on residues His186 and Glu188.

As to quaternary structure, heterodimer of HisH and HisF.

It is found in the cytoplasm. It catalyses the reaction 5-[(5-phospho-1-deoxy-D-ribulos-1-ylimino)methylamino]-1-(5-phospho-beta-D-ribosyl)imidazole-4-carboxamide + L-glutamine = D-erythro-1-(imidazol-4-yl)glycerol 3-phosphate + 5-amino-1-(5-phospho-beta-D-ribosyl)imidazole-4-carboxamide + L-glutamate + H(+). It carries out the reaction L-glutamine + H2O = L-glutamate + NH4(+). It participates in amino-acid biosynthesis; L-histidine biosynthesis; L-histidine from 5-phospho-alpha-D-ribose 1-diphosphate: step 5/9. Its function is as follows. IGPS catalyzes the conversion of PRFAR and glutamine to IGP, AICAR and glutamate. The HisH subunit catalyzes the hydrolysis of glutamine to glutamate and ammonia as part of the synthesis of IGP and AICAR. The resulting ammonia molecule is channeled to the active site of HisF. This is Imidazole glycerol phosphate synthase subunit HisH from Bacillus licheniformis (strain ATCC 14580 / DSM 13 / JCM 2505 / CCUG 7422 / NBRC 12200 / NCIMB 9375 / NCTC 10341 / NRRL NRS-1264 / Gibson 46).